We begin with the raw amino-acid sequence, 190 residues long: Putative glutathione-dependent formaldehyde-activating enzyme (190 aa).

The CENP-V/GFA domain maps to 19–165; that stretch reads FKGGKLYCHC…FRKEGLQTYD (147 aa). Residues cysteine 26, cysteine 28, cysteine 47, cysteine 49, cysteine 52, cysteine 94, and cysteine 97 each coordinate Zn(2+).

This sequence belongs to the Gfa family. Zn(2+) serves as cofactor.

The catalysed reaction is S-(hydroxymethyl)glutathione = glutathione + formaldehyde. It participates in one-carbon metabolism; formaldehyde degradation; formate from formaldehyde (glutathione route): step 1/3. Functionally, catalyzes the condensation of formaldehyde and glutathione to S-hydroxymethylglutathione. The chain is Putative glutathione-dependent formaldehyde-activating enzyme from Phaeosphaeria nodorum (strain SN15 / ATCC MYA-4574 / FGSC 10173) (Glume blotch fungus).